A 540-amino-acid polypeptide reads, in one-letter code: MSGEGTDLPTFQSSRTADGDVINRPGSSQQQLVPIAHTISSPSKAYQKDTAMWSPPLSSHPIMSPPDLTPQHPVFSTEDLTRPAAGLRRRPSVPPPRRYSNGDYDPKLSFTSDTGRALRAREDLYYSDRERENSMSSRTRARDDHPHPDYHERSRPPRTYRNVVGWESGPQKSYFDDSSRSDLGKDRDLEKGMREAGAAPEWASGEKVRRKSTDESIDGYNYESHKRNGTKGTIDLNNLTPEERAMVLRLPWTQWMNSNFKNHFVATIGEFVGTTMFLFFAFAGTQVANIDSNTVNTTTGAATGFNIAVQLYIAVIFGFSLMVNVWIFFRISGGLFNPAVTLGMVLVGAIPIPRAACLFFAQILGGIAASGMVLGLFPTTFNVRTTLGASTSTVQGVFIEAILTAELVFTIFMLAKEKHKATFIAPVGIGLALFIAEMVGVYYTGGSLNPARSFGPCVVSGSFDKEHWIYWIGPITGTFIAVFFYKFIKMLEYEMANPGQDGDAKNDPTQNEKKREQILEERNRRYEKRNGSLRPGSRLS.

The disordered stretch occupies residues 1 to 224; the sequence is MSGEGTDLPT…ESIDGYNYES (224 aa). Over 1-263 the chain is Cytoplasmic; the sequence is MSGEGTDLPT…QWMNSNFKNH (263 aa). Residues 25 to 44 show a composition bias toward polar residues; that stretch reads PGSSQQQLVPIAHTISSPSK. Composition is skewed to basic and acidic residues over residues 119-133, 140-155, 174-194, and 204-214; these read RARE…EREN, RARD…ERSR, YFDD…KGMR, and SGEKVRRKSTD. A helical membrane pass occupies residues 264–284; sequence FVATIGEFVGTTMFLFFAFAG. Over 285–308 the chain is Extracellular; the sequence is TQVANIDSNTVNTTTGAATGFNIA. Asn296 carries an N-linked (GlcNAc...) asparagine glycan. Residues 309–329 traverse the membrane as a helical segment; it reads VQLYIAVIFGFSLMVNVWIFF. At 330–332 the chain is on the cytoplasmic side; the sequence is RIS. The chain crosses the membrane as a helical span at residues 333-353; that stretch reads GGLFNPAVTLGMVLVGAIPIP. The Extracellular portion of the chain corresponds to 354 to 356; sequence RAA. Residues 357-377 form a helical membrane-spanning segment; it reads CLFFAQILGGIAASGMVLGLF. At 378–393 the chain is on the cytoplasmic side; it reads PTTFNVRTTLGASTST. Residues 394 to 414 traverse the membrane as a helical segment; that stretch reads VQGVFIEAILTAELVFTIFML. Residues 415–420 lie on the Extracellular side of the membrane; it reads AKEKHK. A helical membrane pass occupies residues 421–441; sequence ATFIAPVGIGLALFIAEMVGV. The Cytoplasmic portion of the chain corresponds to 442–467; sequence YYTGGSLNPARSFGPCVVSGSFDKEH. A helical membrane pass occupies residues 468-488; the sequence is WIYWIGPITGTFIAVFFYKFI. The Extracellular segment spans residues 489-540; it reads KMLEYEMANPGQDGDAKNDPTQNEKKREQILEERNRRYEKRNGSLRPGSRLS. Positions 499–540 are disordered; it reads GQDGDAKNDPTQNEKKREQILEERNRRYEKRNGSLRPGSRLS. Over residues 502–530 the composition is skewed to basic and acidic residues; that stretch reads GDAKNDPTQNEKKREQILEERNRRYEKRN. Residue Asn530 is glycosylated (N-linked (GlcNAc...) asparagine).

It belongs to the MIP/aquaporin (TC 1.A.8) family.

Its subcellular location is the membrane. It carries out the reaction H2O(in) = H2O(out). In terms of biological role, water channel required to facilitate the transport of water across membranes. May play a role in the vegetative growth. The chain is Aquaporin-5 from Botryotinia fuckeliana (strain B05.10) (Noble rot fungus).